We begin with the raw amino-acid sequence, 246 residues long: Azurocidin (246 aa).

Positions 1–19 (MPALRFLALLASLLATSRV) are cleaved as a signal peptide. The propeptide occupies 20–26 (GLATLAD). The Peptidase S1 domain maps to 27-242 (IVGGRRAQPQ…FRNWIDSVLN (216 aa)). An intrachain disulfide couples C52 to C68. 2 N-linked (GlcNAc...) asparagine glycosylation sites follow: N139 and N170. Disulfide bonds link C148–C205 and C178–C184. A propeptide spanning residues 245–246 (PA) is cleaved from the precursor.

The protein belongs to the peptidase S1 family. Elastase subfamily.

The protein resides in the cytoplasmic granule membrane. Functionally, this is a neutrophil granule-derived antibacterial and monocyte- and fibroblast-specific chemotactic glycoprotein. Binds heparin. This chain is Azurocidin, found in Sus scrofa (Pig).